A 319-amino-acid polypeptide reads, in one-letter code: Formimidoylglutamase (319 aa).

Asn-127, Asp-150, His-152, Asp-154, Asp-242, and Asp-244 together coordinate Mn(2+).

The protein belongs to the arginase family. Requires Mn(2+) as cofactor.

It carries out the reaction N-formimidoyl-L-glutamate + H2O = formamide + L-glutamate. It functions in the pathway amino-acid degradation; L-histidine degradation into L-glutamate; L-glutamate from N-formimidoyl-L-glutamate (hydrolase route): step 1/1. Its function is as follows. Catalyzes the conversion of N-formimidoyl-L-glutamate to L-glutamate and formamide. The protein is Formimidoylglutamase of Bacillus subtilis (strain 168).